The chain runs to 471 residues: Sestrin-2 (471 aa).

Residue Met1 is modified to N-acetylmethionine. Residues 57-230 (GLEALMSSGR…APSPPSEQST (174 aa)) are N-terminal domain; mediates the alkylhydroperoxide reductase activity. The active-site Cysteine sulfenic acid (-SOH) intermediate is Cys116. Lys166 participates in a covalent cross-link: Glycyl lysine isopeptide (Lys-Gly) (interchain with G-Cter in ubiquitin). The disordered stretch occupies residues 212–241 (DPEGSPAPQAPSPPSEQSTPPSRDSLNHSG). Phosphoserine is present on Ser240. Residues 299–471 (ANPDMLCFVE…ALRAITRYMT (173 aa)) are C-terminal domain; mediates TORC1 regulation. Residues 365–368 (TYNT), Thr377, and Glu442 contribute to the L-leucine site.

It belongs to the sestrin family. In terms of assembly, interacts with the GATOR2 complex which is composed of MIOS, SEC13, SEH1L, WDR24 and WDR59; the interaction is negatively regulated by leucine. Conveys leucine availability via direct interaction with SEH1L and WDR24 components of the GATOR2 complex. Interacts with RRAGA, RRAGB, RRAGC and RRAGD; may function as a guanine nucleotide dissociation inhibitor for RRAGs and regulate them. May interact with the TORC2 complex. Interacts with KEAP1, RBX1, SQSTM and ULK1; to regulate the degradation of KEAP1. May also associate with the complex composed of TSC1, TSC2 and the AMP-responsive protein kinase/AMPK to regulate TORC1 signaling. May interact with PRDX1. Phosphorylated by ULK1 at multiple sites. In terms of processing, ubiquitinated at Lys-166 by RNF167 via 'Lys-63'-linked polyubiquitination in response to leucine deprivation: ubiquitination promotes SESN2-interaction with the GATOR2 complex, leading to inhibit the TORC1 signaling pathway. Deubiquitinated at Lys-166 by STAMBPL1, promoting the TORC1 signaling pathway. Ubiquitinated by RNF186; ubiquitination mediates proteasomal degradation.

The protein resides in the cytoplasm. It catalyses the reaction a hydroperoxide + L-cysteinyl-[protein] = S-hydroxy-L-cysteinyl-[protein] + an alcohol. Its function is as follows. Functions as an intracellular leucine sensor that negatively regulates the mTORC1 signaling pathway through the GATOR complex. In absence of leucine, binds the GATOR subcomplex GATOR2 and prevents mTORC1 signaling. Binding of leucine to SESN2 disrupts its interaction with GATOR2 thereby activating the TORC1 signaling pathway. This stress-inducible metabolic regulator also plays a role in protection against oxidative and genotoxic stresses. May negatively regulate protein translation in response to endoplasmic reticulum stress, via mTORC1. May positively regulate the transcription by NFE2L2 of genes involved in the response to oxidative stress by facilitating the SQSTM1-mediated autophagic degradation of KEAP1. May also mediate TP53 inhibition of TORC1 signaling upon genotoxic stress. Moreover, may prevent the accumulation of reactive oxygen species (ROS) through the alkylhydroperoxide reductase activity born by the N-terminal domain of the protein. Was originally reported to contribute to oxidative stress resistance by reducing PRDX1. However, this could not be confirmed. This chain is Sestrin-2, found in Bos taurus (Bovine).